The sequence spans 828 residues: MVGSQEKKNNHIELSETPATDKNNLNTTHLENTQLSKALSPPTSLPQIQIQMINQNLTHTGIAQNNTEKANRHQYRDSGLQYLTRCFEPLAMLNDSKEDFPTQPSNNIANYPGDIQILPIFDCCEISESIQAISLPNVTSPSKTKDVPGLFLRTISENSKSKSEPECESLISVKESSVMENHTFLFHEQIIMSGQQKCELHEKPKVLVVSPQQVMILYMNKLTPYERTEILTYPQIYFIGANAKKRPGVYGPNNSEYDNEQGAYIHVPHDHVAYRYEMLKIIGKGSFGQVIKAYDHKTHEHVALKIVRNEKRFHRQAQEEIRILHHLRRHDKYNTMNIIHMFDYFTFRNHTCITFELLSINLYELIKKNGFKGFSLQLVRKFAHSLLQCLDALYKNDIIHCDMKPENVLLKQQGRSGIKVIDFGSSCFENQRIYTYIQSRFYRAPEVILGGKYGRAIDMWSLGCILAELLSGHALFPGENESDQLACIIEVLGMPNKNILASSKRSKSFFSPKGYPRYCTVRTMSDGMVVLIGGQSRRGKQRGPPCSKSLSKALDGCKDPLFLNFIRGCLEWDADKRLTPSEALKHPWLRRRLPRPPSSSSGCGGVSGLCSSRNESPVTGQNRNFAAETTASSTSATSISLTIKRENSHSSLRLHHGAVPETDFKLIKSVPEGSSTATKEPMMNSDILPESFRQTTVVSPSKHSADSGGMSCLSAVDVGPSRYYPYMNNNENNRLFSSSLNSSANSLSHLEQATKLDALGEYSASTTPNLLSKNTGYSFNSGSINIDVAQESLVNIASNYALDKSIDIIGKSNVSLHTNKLKVQSKDM.

A compositionally biased stretch (basic and acidic residues) spans 1 to 14 (MVGSQEKKNNHIEL). The interval 1–26 (MVGSQEKKNNHIELSETPATDKNNLN) is disordered. The span at 17–26 (TPATDKNNLN) shows a compositional bias: polar residues. The 314-residue stretch at 276–589 (YEMLKIIGKG…PSEALKHPWL (314 aa)) folds into the Protein kinase domain. ATP-binding positions include 282 to 290 (IGKGSFGQV) and K305. Residue D402 is the Proton acceptor of the active site. Position 616 is a phosphoserine (S616).

This sequence belongs to the protein kinase superfamily. CMGC Ser/Thr protein kinase family. MNB/DYRK subfamily. In terms of processing, autophosphorylated on tyrosine residues.

It catalyses the reaction L-seryl-[protein] + ATP = O-phospho-L-seryl-[protein] + ADP + H(+). It carries out the reaction L-threonyl-[protein] + ATP = O-phospho-L-threonyl-[protein] + ADP + H(+). The enzyme catalyses L-tyrosyl-[protein] + ATP = O-phospho-L-tyrosyl-[protein] + ADP + H(+). This Drosophila melanogaster (Fruit fly) protein is Putative dual specificity tyrosine-phosphorylation-regulated kinase 3 homolog (Dyrk3).